The chain runs to 156 residues: 3-dehydroquinate dehydratase 1 (156 aa).

Residue Y32 is the Proton acceptor of the active site. Residues N84, H90, and D97 each coordinate substrate. Catalysis depends on H110, which acts as the Proton donor. Substrate contacts are provided by residues 111–112 and R121; that span reads LS.

The protein belongs to the type-II 3-dehydroquinase family. As to quaternary structure, homododecamer.

The enzyme catalyses 3-dehydroquinate = 3-dehydroshikimate + H2O. Its pathway is metabolic intermediate biosynthesis; chorismate biosynthesis; chorismate from D-erythrose 4-phosphate and phosphoenolpyruvate: step 3/7. In terms of biological role, catalyzes a trans-dehydration via an enolate intermediate. The protein is 3-dehydroquinate dehydratase 1 (aroQ1) of Ralstonia nicotianae (strain ATCC BAA-1114 / GMI1000) (Ralstonia solanacearum).